A 444-amino-acid polypeptide reads, in one-letter code: MSKTNQNLTIDKVIDNNNNIYLLKLLMIGGDVCSKNGISMVEKFLKHDKNLIQVFDDYDSTDEYINFKMKLNEFSSIDTSNSINNGIIYSENNKNKNNNNNYNYNNNNYNNNNNNNNNNNNNNNNNNNNNNNNNNSNFKIQIQIKDLSDCYCDLKIQTIPSCFYRGIHGFIIVYDINDHIAYNNIPKWIEEINSFSMKNSKIIVVCNDSNSKTPNFSDSSSSSSSSSSSNIIPLNKNTKNKVVGGVGVDPILANKLFQSLSIPHFIVSVDTNENIKMAFNSLKTLIFENNPLFQFFKLQGDDNNNNNNNNNNNNNNNNNNNNNNNNNNNNLNYLNNLNNLNNLNNENNINNNSLNNNNNNNNNNNNNNNNNNNNNNNNNNNNNNNNNNNNNNNNNTYNNDLKTNKKSLEIKKHNSNIEKKEVKQNIKDKKNKNKNKNACTCNLM.

29–36 (GGDVCSKN) contributes to the GTP binding site. The Effector region signature appears at 51–58 (LIQVFDDY). A GTP-binding site is contributed by 73–77 (EFSSI). The interval 91 to 136 (ENNKNKNNNNNYNYNNNNYNNNNNNNNNNNNNNNNNNNNNNNNNNS) is disordered. Residues 95-135 (NKNNNNNYNYNNNNYNNNNNNNNNNNNNNNNNNNNNNNNNN) are compositionally biased toward low complexity. 207–210 (NDSN) contributes to the GTP binding site. Disordered stretches follow at residues 213-232 (TPNFSDSSSSSSSSSSSNII) and 298-401 (LQGD…NNDL). 2 stretches are compositionally biased toward low complexity: residues 217-232 (SDSSSSSSSSSSSNII) and 303-399 (NNNN…TYNN). Cys439 carries S-palmitoyl cysteine lipidation. Cys441 is modified (cysteine methyl ester). Cys441 carries S-geranylgeranyl cysteine lipidation. A propeptide spans 442 to 444 (NLM) (removed in mature form).

The protein belongs to the small GTPase superfamily. Rab family.

The protein resides in the cell membrane. This Dictyostelium discoideum (Social amoeba) protein is Ras-related protein RabX (rabX).